Here is a 622-residue protein sequence, read N- to C-terminus: Polypeptide N-acetylgalactosaminyltransferase 6 (622 aa).

The Cytoplasmic segment spans residues 1–8 (MRLLRRRH). A helical; Signal-anchor for type II membrane protein transmembrane segment spans residues 9 to 28 (MSLRLAMLGSVFMLFLFIRQ). The Lumenal segment spans residues 29 to 622 (KDVSNQEQAM…RDPYQLWLFV (594 aa)). Asparagine 86 carries an N-linked (GlcNAc...) asparagine glycan. The tract at residues 176–285 (LPTTSVIIVF…HGWLEPLLAR (110 aa)) is catalytic subdomain A. Positions 269, 271, and 407 each coordinate Mn(2+). A catalytic subdomain B region spans residues 348–410 (PIKSPTFAGG…PCSVVGHVFR (63 aa)). Asparagine 476 carries N-linked (GlcNAc...) asparagine glycosylation. In terms of domain architecture, Ricin B-type lectin spans 506-622 (TNQCLDVGEN…RDPYQLWLFV (117 aa)). Cysteine 509 and cysteine 527 form a disulfide bridge. The UDP-N-acetyl-alpha-D-galactosamine site is built by aspartate 511, glutamate 514, histidine 528, and asparagine 533. 2 disulfide bridges follow: cysteine 553–cysteine 566 and cysteine 597–cysteine 610.

Belongs to the glycosyltransferase 2 family. GalNAc-T subfamily. It depends on Mn(2+) as a cofactor.

The protein localises to the golgi apparatus membrane. The catalysed reaction is L-seryl-[protein] + UDP-N-acetyl-alpha-D-galactosamine = a 3-O-[N-acetyl-alpha-D-galactosaminyl]-L-seryl-[protein] + UDP + H(+). It carries out the reaction L-threonyl-[protein] + UDP-N-acetyl-alpha-D-galactosamine = a 3-O-[N-acetyl-alpha-D-galactosaminyl]-L-threonyl-[protein] + UDP + H(+). It participates in protein modification; protein glycosylation. Catalyzes the initial reaction in O-linked oligosaccharide biosynthesis, the transfer of an N-acetyl-D-galactosamine residue to a serine or threonine residue on the protein receptor. May participate in synthesis of oncofetal fibronectin. Has activity toward Muc1a, Muc2, EA2 and fibronectin peptides. The polypeptide is Polypeptide N-acetylgalactosaminyltransferase 6 (Galnt6) (Mus musculus (Mouse)).